The primary structure comprises 174 residues: MKISVIPEQVAETLDAENHFIVREVFDVHLSDQGFELSTRSVSPYRKDYISDDDSDEDSACYGAFIDQELVGKIELNSTWNDLASIEHIVVSHTHRGKGVAHSLIEFAKKWALSRQLLGIRLETQTNNVPACNLYAKCGFTLGGIDLFTYKTRPQVSNETAMYWYWFSGAQDDA.

Positions 20 to 170 (FIVREVFDVH…AMYWYWFSGA (151 aa)) constitute an N-acetyltransferase domain.

The protein belongs to the acetyltransferase family. GNAT subfamily.

It carries out the reaction streptothricin F + acetyl-CoA = N(beta)-acetylstreptothricin F + CoA + H(+). Functionally, involved in resistance to streptothricin, a broad-spectrum antibiotic produced by streptomycetes. Detoxifies streptothricin via acetylation of the beta amino group of the first beta-lysyl moiety of streptothricin. The sequence is that of Streptothricin acetyltransferase (sat-1) from Escherichia coli.